A 277-amino-acid polypeptide reads, in one-letter code: Putative phosphoenolpyruvate synthase regulatory protein (277 aa).

157–164 (GVSRSGKT) contributes to the ADP binding site.

The protein belongs to the pyruvate, phosphate/water dikinase regulatory protein family. PSRP subfamily.

The enzyme catalyses [pyruvate, water dikinase] + ADP = [pyruvate, water dikinase]-phosphate + AMP + H(+). It catalyses the reaction [pyruvate, water dikinase]-phosphate + phosphate + H(+) = [pyruvate, water dikinase] + diphosphate. Bifunctional serine/threonine kinase and phosphorylase involved in the regulation of the phosphoenolpyruvate synthase (PEPS) by catalyzing its phosphorylation/dephosphorylation. This chain is Putative phosphoenolpyruvate synthase regulatory protein, found in Azoarcus sp. (strain BH72).